The chain runs to 541 residues: ATP synthase subunit alpha (541 aa).

Residue 169 to 176 coordinates ATP; it reads GDRQTGKT. The interval 506–541 is disordered; sequence NTLLNVEEGDTGEEENNEGHNKAEQDTEEKDTEEVV. 2 stretches are compositionally biased toward acidic residues: residues 512-521 and 531-541; these read EEGDTGEEEN and DTEEKDTEEVV.

It belongs to the ATPase alpha/beta chains family. As to quaternary structure, F-type ATPases have 2 components, CF(1) - the catalytic core - and CF(0) - the membrane proton channel. CF(1) has five subunits: alpha(3), beta(3), gamma(1), delta(1), epsilon(1). CF(0) has three main subunits: a(1), b(2) and c(9-12). The alpha and beta chains form an alternating ring which encloses part of the gamma chain. CF(1) is attached to CF(0) by a central stalk formed by the gamma and epsilon chains, while a peripheral stalk is formed by the delta and b chains.

Its subcellular location is the cell inner membrane. The enzyme catalyses ATP + H2O + 4 H(+)(in) = ADP + phosphate + 5 H(+)(out). In terms of biological role, produces ATP from ADP in the presence of a proton gradient across the membrane. The alpha chain is a regulatory subunit. This is ATP synthase subunit alpha from Halothermothrix orenii (strain H 168 / OCM 544 / DSM 9562).